The chain runs to 548 residues: Chaperonin GroEL (548 aa).

ATP is bound by residues T30–P33, K51, D87–T91, G415, N479–A481, and D495.

Belongs to the chaperonin (HSP60) family. As to quaternary structure, forms a cylinder of 14 subunits composed of two heptameric rings stacked back-to-back. Interacts with the co-chaperonin GroES.

It localises to the cytoplasm. The enzyme catalyses ATP + H2O + a folded polypeptide = ADP + phosphate + an unfolded polypeptide.. Together with its co-chaperonin GroES, plays an essential role in assisting protein folding. The GroEL-GroES system forms a nano-cage that allows encapsulation of the non-native substrate proteins and provides a physical environment optimized to promote and accelerate protein folding. The sequence is that of Chaperonin GroEL from Methylibium petroleiphilum (strain ATCC BAA-1232 / LMG 22953 / PM1).